Consider the following 751-residue polypeptide: MTISPPEREAKKVKIVVDRNPVETSLEKWAKPGHFSRALSKGPTTTTWIWNLHADAHDFDSHTSDLEDISRKVFSAHFGQLGIIFIWLSGMYFHGARFSNYEAWLSDPTHIKPSAQVVWPVVGQEILNGDVGGGFQGIQITSGFFQLWRASGITSELQLYATAIGGLVMAAAMFFAGWFHYHKAAPKLEWFQNVESMMNHHLAGLLGLGSLAWAGHQIHISLPINKLLDAGVDPKEIPLPHELMLNRELMAQLYPSFAKGLAPFFTLNWGEYSDFLTFQGGLNPVTGGLWLSDEAHHHLAIAVLFLIAGHQYRTNWGIGHSMKEILEAHKGPFTGEGHKGLYEILTTSWHAQLAINLAMLGSLSIIVAHHMYAMPPYPYLATDYGTQLSLFTHHVWIGGFCIVGAGAHAAIFMVRDYDPTNNYNNLLDRVIRHRDAIISHLNWVCIFLGFHSFGLYIHNDTMSALGRPQDMFSDTAIQLQPVFAQWVQNTHFLAPQLTAPNALAATSVSWGGDVVAVGGKVAMMPIALGTSDFLVHHIHAFTIHVTVLILLKGVLYSRSSRLIPDKANLGFRFPCDGPGRGGTCQVSAWDHVFLGLFWMYNSLSIVIFHFSWKMQSDVWGSVTASGVTHITGGNFAASANTINGWLRDFLWAQSSQVIQSYGSALSAYGLMFLGAHFVWAFSLMFLFSGRGYWQELIESIVWAHNKLKVAPAIQPRALSITQGRAVGVAHYLLGGIATTWSFFLARIISVG.

Helical transmembrane passes span 73-96, 159-182, 198-222, 294-312, 349-372, 388-414, 436-458, and 533-551; these read VFSA…FHGA, LYAT…FHYH, MNHH…HISL, EAHH…GHQY, WHAQ…HHMY, LSLF…IFMV, AIIS…LYIH, and FLVH…LILL. Residues cysteine 575 and cysteine 584 each contribute to the [4Fe-4S] cluster site. 2 helical membrane-spanning segments follow: residues 591–612 and 665–687; these read HVFL…HFSW and LSAY…MFLF. Residue histidine 676 participates in chlorophyll a' binding. Chlorophyll a contacts are provided by methionine 684 and tyrosine 692. Residue tryptophan 693 participates in phylloquinone binding. The chain crosses the membrane as a helical span at residues 725–745; it reads AVGVAHYLLGGIATTWSFFLA.

This sequence belongs to the PsaA/PsaB family. As to quaternary structure, the PsaA/B heterodimer binds the P700 chlorophyll special pair and subsequent electron acceptors. PSI consists of a core antenna complex that captures photons, and an electron transfer chain that converts photonic excitation into a charge separation. The eukaryotic PSI reaction center is composed of at least 11 subunits. P700 is a chlorophyll a/chlorophyll a' dimer, A0 is one or more chlorophyll a, A1 is one or both phylloquinones and FX is a shared 4Fe-4S iron-sulfur center. serves as cofactor.

It localises to the plastid. The protein resides in the chloroplast thylakoid membrane. It carries out the reaction reduced [plastocyanin] + hnu + oxidized [2Fe-2S]-[ferredoxin] = oxidized [plastocyanin] + reduced [2Fe-2S]-[ferredoxin]. In terms of biological role, psaA and PsaB bind P700, the primary electron donor of photosystem I (PSI), as well as the electron acceptors A0, A1 and FX. PSI is a plastocyanin/cytochrome c6-ferredoxin oxidoreductase, converting photonic excitation into a charge separation, which transfers an electron from the donor P700 chlorophyll pair to the spectroscopically characterized acceptors A0, A1, FX, FA and FB in turn. Oxidized P700 is reduced on the lumenal side of the thylakoid membrane by plastocyanin or cytochrome c6. In Oltmannsiellopsis viridis (Marine flagellate), this protein is Photosystem I P700 chlorophyll a apoprotein A1.